We begin with the raw amino-acid sequence, 213 residues long: Putative nascent polypeptide-associated complex subunit alpha-like protein (213 aa).

Positions 1–46 are disordered; the sequence is MPGEATETVPAIEQQLLQPQAETGSGTESDSDESVPELEEQDSTQV. The span at 15–28 shows a compositional bias: polar residues; sequence QLLQPQAETGSGTE. Over residues 29–42 the composition is skewed to acidic residues; it reads SDSDESVPELEEQD. Phosphoserine is present on residues Ser-43 and Ser-131. An NAC-A/B domain is found at 69-134; sequence RRSEKKARKA…AKIEDLSQEA (66 aa). N6-acetyllysine; alternate is present on Lys-141. A Glycyl lysine isopeptide (Lys-Gly) (interchain with G-Cter in SUMO2); alternate cross-link involves residue Lys-141. Thr-160 bears the Phosphothreonine mark. A phosphoserine mark is found at Ser-165, Ser-185, and Ser-201. The UBA domain maps to 175–211; it reads VEIKDIELVLSQANVWGAKAVRALKNSNDIVNAIMEL. Thr-212 carries the post-translational modification Phosphothreonine.

The protein belongs to the NAC-alpha family.

The polypeptide is Putative nascent polypeptide-associated complex subunit alpha-like protein (Homo sapiens (Human)).